The primary structure comprises 309 residues: Methionyl-tRNA formyltransferase (309 aa).

109–112 is a binding site for (6S)-5,6,7,8-tetrahydrofolate; sequence SLLP.

Belongs to the Fmt family.

It catalyses the reaction L-methionyl-tRNA(fMet) + (6R)-10-formyltetrahydrofolate = N-formyl-L-methionyl-tRNA(fMet) + (6S)-5,6,7,8-tetrahydrofolate + H(+). In terms of biological role, attaches a formyl group to the free amino group of methionyl-tRNA(fMet). The formyl group appears to play a dual role in the initiator identity of N-formylmethionyl-tRNA by promoting its recognition by IF2 and preventing the misappropriation of this tRNA by the elongation apparatus. The protein is Methionyl-tRNA formyltransferase of Clostridium perfringens (strain SM101 / Type A).